A 242-amino-acid chain; its full sequence is E3 ubiquitin-protein ligase ZNRF2 (242 aa).

A disordered region spans residues 1-141; that stretch reads MGAKQSGPAA…VGGSPGGPRL (141 aa). G2 carries N-myristoyl glycine lipidation. S19, S21, and S25 each carry phosphoserine. Residues 19–29 are compositionally biased toward low complexity; that stretch reads SGSDLPSSSSG. Residues 30–41 show a composition bias toward gly residues; it reads GANGTAGGGGGA. The span at 59–97 shows a compositional bias: low complexity; the sequence is PSASGGAAAAAAAPAAPAAPRSRSLGGAVGSVASGARAA. Residues S82, S89, S113, S116, and S135 each carry the phosphoserine modification. Residues 99–118 are compositionally biased toward polar residues; it reads SPFSIPNSSSGPYGSQDSVH. S145 carries the phosphoserine; by MTOR modification. Residues S151 and S193 each carry the phosphoserine modification. The RING-type; atypical zinc finger occupies 199–240; it reads CAICLEELQQGDTIARLPCLCIYHKGCIDEWFEVNRSCPEHP.

In terms of assembly, interacts with UBE2N. Interacts with ZNRF1. Interacts (when phosphorylated) with YWHAE. Phosphorylated; leading to binding to YWHAE. Phosphorylated by MTOR at Ser-145 and dephosphorylated by PP6C. Ser-145 phosphorylation stimulates vesicle-to-cytosol translocation. In terms of tissue distribution, highly expressed in the brain, with higher expression during development than in adult. Expressed also in mammary glands, testis, colon and kidney.

It is found in the endosome membrane. It localises to the lysosome membrane. The protein localises to the presynaptic cell membrane. The protein resides in the cytoplasm. The enzyme catalyses S-ubiquitinyl-[E2 ubiquitin-conjugating enzyme]-L-cysteine + [acceptor protein]-L-lysine = [E2 ubiquitin-conjugating enzyme]-L-cysteine + N(6)-ubiquitinyl-[acceptor protein]-L-lysine.. The protein operates within protein modification; protein ubiquitination. E3 ubiquitin-protein ligase that plays a role in the establishment and maintenance of neuronal transmission and plasticity. Ubiquitinates the Na(+)/K(+) ATPase alpha-1 subunit/ATP1A1 and thereby influences its endocytosis and/or degradation. Acts also as a positive regulator of mTORC1 activation by amino acids, which functions upstream of the V-ATPase and of Rag-GTPases. In turn, phosphorylation by mTOR leads to its inhibition via targeting to the cytosol allowing a self-regulating feedback mechanism. The sequence is that of E3 ubiquitin-protein ligase ZNRF2 (ZNRF2) from Homo sapiens (Human).